The following is a 200-amino-acid chain: 3-isopropylmalate dehydratase small subunit (200 aa).

It belongs to the LeuD family. LeuD type 1 subfamily. As to quaternary structure, heterodimer of LeuC and LeuD.

The enzyme catalyses (2R,3S)-3-isopropylmalate = (2S)-2-isopropylmalate. It functions in the pathway amino-acid biosynthesis; L-leucine biosynthesis; L-leucine from 3-methyl-2-oxobutanoate: step 2/4. In terms of biological role, catalyzes the isomerization between 2-isopropylmalate and 3-isopropylmalate, via the formation of 2-isopropylmaleate. This is 3-isopropylmalate dehydratase small subunit from Actinobacillus pleuropneumoniae serotype 5b (strain L20).